Reading from the N-terminus, the 945-residue chain is Netrin receptor UNC5B (945 aa).

Positions 1–26 are cleaved as a signal peptide; that stretch reads MRARSGVRSALLLALLLCWDPTPSLA. The Extracellular segment spans residues 27–377; sequence GVDSAGQVLP…LETSGDVALY (351 aa). The Ig-like domain occupies 48–145; that stretch reads PYFLLEPQDA…SGTTKSRRAY (98 aa). Cystine bridges form between C69-C130, C81-C128, C174-C225, C258-C295, C262-C299, C273-C285, C314-C348, C318-C353, and C326-C338. The 90-residue stretch at 153–242 folds into the Ig-like C2-type domain; that stretch reads KNFDQEPLAK…KRRSTTATVI (90 aa). N222 carries N-linked (GlcNAc...) asparagine glycosylation. 2 consecutive TSP type-1 domains span residues 246-300 and 302-354; these read NGGW…TVCP and DGAW…GLCV. Residue N347 is glycosylated (N-linked (GlcNAc...) asparagine). A helical membrane pass occupies residues 378-398; the sequence is AGLVVAVFVVVAVLMAVGVIV. Topologically, residues 399–945 are cytoplasmic; the sequence is YRRNCRDFDT…LVAMATDGDC (547 aa). Residue C403 is the site of S-palmitoyl cysteine attachment. Residues 543–686 enclose the ZU5 domain; sequence SSVSGTFGCL…LGTYVFMGES (144 aa). At Y581 the chain carries Phosphotyrosine. The interval 689 to 838 is UPA domain; that stretch reads RSAVKRLQLA…AETPAGSLDA (150 aa). Residues 707 to 725 form an interaction with DCC region; sequence SLEYSLRVYCLEDTPVALK. Residues 865 to 943 form the Death domain; that stretch reads KICSSLDAPN…EMLVAMATDG (79 aa).

It belongs to the unc-5 family. In terms of assembly, interacts with the cytoplasmic part of DCC. Interacts with GNAI2 via its cytoplasmic part. Interacts (via death domain) with DAPK1 (via death domain). Interacts (via extracellular domain) with FLRT2 and FLRT3 (via extracellular domain), but has higher affinity for FLRT3. Identified in a complex with FLRT3 and ADGRL3; does not interact with ADGRL3 by itself. In terms of processing, phosphorylated on cytoplasmic tyrosine residues. Post-translationally, palmitoylation is required for pro-apoptotic activity, but not for location at lipid rafts. Proteolytically cleaved by caspases during apoptosis. The cleavage does not take place when the receptor is associated with netrin ligand. Its cleavage by caspases is required to induce apoptosis. Highly expressed in brain. Expressed in lung during late development. Expressed during early blood vessel formation, in the semicircular canal and in a dorsal to ventral gradient in the retina.

It localises to the cell membrane. Its subcellular location is the membrane raft. Receptor for netrin required for axon guidance. Mediates axon repulsion of neuronal growth cones in the developing nervous system upon ligand binding. Axon repulsion in growth cones may be caused by its association with DCC that may trigger signaling for repulsion. Functions as a netrin receptor that negatively regulates vascular branching during angiogenesis. Mediates retraction of tip cell filopodia on endothelial growth cones in response to netrin. It also acts as a dependence receptor required for apoptosis induction when not associated with netrin ligand. Mediates apoptosis by activating DAPK1. In the absence of NTN1, activates DAPK1 by reducing its autoinhibitory phosphorylation at Ser-308 thereby increasing its catalytic activity. This is Netrin receptor UNC5B (Unc5b) from Mus musculus (Mouse).